An 857-amino-acid chain; its full sequence is Alanine--tRNA ligase (857 aa).

The Zn(2+) site is built by H556, H560, C658, and H662.

This sequence belongs to the class-II aminoacyl-tRNA synthetase family. Requires Zn(2+) as cofactor.

It localises to the cytoplasm. The catalysed reaction is tRNA(Ala) + L-alanine + ATP = L-alanyl-tRNA(Ala) + AMP + diphosphate. Catalyzes the attachment of alanine to tRNA(Ala) in a two-step reaction: alanine is first activated by ATP to form Ala-AMP and then transferred to the acceptor end of tRNA(Ala). Also edits incorrectly charged Ser-tRNA(Ala) and Gly-tRNA(Ala) via its editing domain. In Sulfurovum sp. (strain NBC37-1), this protein is Alanine--tRNA ligase.